Consider the following 285-residue polypeptide: Small ribosomal subunit protein uS2 (285 aa).

The tract at residues 262 to 285 is disordered; the sequence is NDDWNEDDTAPAAPGAASWGGAAF. The segment covering 271–285 has biased composition (low complexity); it reads APAAPGAASWGGAAF.

This sequence belongs to the universal ribosomal protein uS2 family. As to quaternary structure, component of the small ribosomal subunit. Mature ribosomes consist of a small (40S) and a large (60S) subunit. The 40S subunit contains about 33 different proteins and 1 molecule of RNA (18S). The 60S subunit contains about 49 different proteins and 3 molecules of RNA (28S, 5.8S and 5S). Interacts with ribosomal protein S21.

Its subcellular location is the cytoplasm. In terms of biological role, required for the assembly and/or stability of the 40S ribosomal subunit. Required for the processing of the 20S rRNA-precursor to mature 18S rRNA in a late step of the maturation of 40S ribosomal subunits. The chain is Small ribosomal subunit protein uS2 from Anopheles gambiae (African malaria mosquito).